Consider the following 940-residue polypeptide: Serine/threonine-protein phosphatase 1 regulatory subunit 10 (940 aa).

An interaction with TOX4 region spans residues 1–348 (MGSGPIDPKE…EPAPPSEAMD (348 aa)). The TFIIS N-terminal domain maps to 73–147 (KLLNNWLTYS…SDWMAVIRSQ (75 aa)). Disordered regions lie at residues 147–211 (QSST…FRST), 247–270 (SNVAAPGDATPPAEKKYKPLNTTP), 304–400 (KIKK…KSVT), and 533–905 (YVET…HGGD). Composition is skewed to basic and acidic residues over residues 153 to 166 (AEKDKKKRKDEGKS) and 174 to 196 (PLTEVKAETRAEEAPEKKREKPK). Residue Lys-179 forms a Glycyl lysine isopeptide (Lys-Gly) (interchain with G-Cter in SUMO2) linkage. Thr-256 bears the Phosphothreonine mark. Residue Lys-262 forms a Glycyl lysine isopeptide (Lys-Gly) (interchain with G-Cter in SUMO2) linkage. Ser-313 carries the post-translational modification Phosphoserine. Over residues 325–336 (KTSTEPSTAKPS) the composition is skewed to low complexity. The segment at 357 to 433 (PPVEVPELMD…NKIKDFGEAA (77 aa)) is necessary for interaction with PPP1CA. Position 382 is a phosphoserine (Ser-382). The interval 393–408 (GRKRKSVTWPEEGKLR) is necessary for interaction with PPP1CC. Residues 394 to 423 (RKRKSVTWPEEGKLREYFYFELDETERVNV) carry the PP1-binding motif motif. Residue Ser-398 is modified to Phosphoserine; by PKA. Positions 418–619 (TERVNVNKIK…IKQMLVPHGL (202 aa)) are interaction with WDR82. 2 stretches are compositionally biased toward gly residues: residues 540–551 (GGSGGSPDGAGG) and 565–579 (MGAGKGPQGPGGGGI). Ser-545 carries the phosphoserine modification. The segment covering 583 to 595 (EILTSIMGSPNSH) has biased composition (polar residues). Ser-591 carries the post-translational modification Phosphoserine. Over residues 596-611 (PSEELLKQPDYSDKIK) the composition is skewed to basic and acidic residues. Pro residues predominate over residues 644–655 (PPGPGGPMPGPH). Arg-665 bears the Omega-N-methylarginine mark. Residues 676–690 (GDPFWDGPGDPMRGG) are compositionally biased toward low complexity. The residue at position 693 (Arg-693) is an Omega-N-methylarginine. Pro residues predominate over residues 714 to 723 (EPPPPPPPPF). 2 stretches are compositionally biased toward gly residues: residues 726-764 (ARGGRSGGGPPNGRGGPGGGMVGGGGHRPHEGPGGGMGN) and 790-845 (SSMG…GSGG). Arg-739 bears the Omega-N-methylarginine mark. Basic and acidic residues-rich tracts occupy residues 862–886 (PHDVPGHRGHDHRGPPHEHRGHDGP) and 894–903 (RGHDGGHSHG). The C3H1-type zinc-finger motif lies at 906–934 (MSNRPVCRHFMMKGNCRYENNCAFYHPGV).

In terms of assembly, component of the PNUTS-PP1 complex (also named PTW/PP1 complex), composed of PPP1R10/PNUTS, TOX4, WDR82, and PPP1CA (or PPP1CB or PPP1CC). Phosphorylated on Ser-398 by PKA within the region necessary for interaction with PPP1CA.

It localises to the nucleus. Its subcellular location is the chromosome. Functionally, substrate-recognition component of the PNUTS-PP1 protein phosphatase complex, a protein phosphatase 1 (PP1) complex that promotes RNA polymerase II transcription pause-release, allowing transcription elongation. Promoter-proximal pausing by RNA polymerase II is a transcription halt following transcription initiation but prior to elongation, which acts as a checkpoint to control that transcripts are favorably configured for transcriptional elongation. The PNUTS-PP1 complex mediates the release of RNA polymerase II from promoter-proximal region of genes by catalyzing dephosphorylation of proteins involved in transcription, such as AFF4, CDK9, MEPCE, INTS12, NCBP1, POLR2M/GDOWN1 and SUPT6H. The PNUTS-PP1 complex also regulates RNA polymerase II transcription termination by mediating dephosphorylation of SUPT5H in termination zones downstream of poly(A) sites, thereby promoting deceleration of RNA polymerase II transcription. PNUTS-PP1 complex is also involved in the response to replication stress by mediating dephosphorylation of POLR2A at 'Ser-5' of the CTD, promoting RNA polymerase II degradation. The PNUTS-PP1 complex also plays a role in the control of chromatin structure and cell cycle progression during the transition from mitosis into interphase. PNUTS-PP1 complex mediates dephosphorylation of MYC, promoting MYC stability by preventing MYC ubiquitination by the SCF(FBXW7) complex. In addition to acts as a substrate-recognition component, PPP1R10/PNUTS also acts as a nuclear targeting subunit for the PNUTS-PP1 complex. In some context, PPP1R10/PNUTS also acts as an inhibitor of protein phosphatase 1 (PP1) activity by preventing access to substrates, such as RB. In Macaca mulatta (Rhesus macaque), this protein is Serine/threonine-protein phosphatase 1 regulatory subunit 10 (PPP1R10).